We begin with the raw amino-acid sequence, 751 residues long: Diamine oxidase [copper-containing] (751 aa).

The signal sequence occupies residues 1–22 (MSLAFGWAAVILLLQTADTASA). 2 N-linked (GlcNAc...) asparagine glycosylation sites follow: Asn61 and Asn110. Asp373 serves as the catalytic Proton acceptor. Residues Cys391 and Cys417 are joined by a disulfide bond. The Schiff-base intermediate with substrate; via topaquinone role is filled by Tyr461. The residue at position 461 (Tyr461) is a 2',4',5'-topaquinone. 2 residues coordinate Cu(2+): His510 and His512. Residues Asp519, Leu520, and Asp521 each contribute to the Ca(2+) site. Residue Asn538 is glycosylated (N-linked (GlcNAc...) asparagine). Glu562, Phe653, Asn656, Glu658, Asp664, and Leu665 together coordinate Ca(2+). His675 lines the Cu(2+) pocket. N-linked (GlcNAc...) asparagine glycosylation occurs at Asn745.

It belongs to the copper/topaquinone oxidase family. Homodimer; disulfide-linked. Cu(2+) is required as a cofactor. Ca(2+) serves as cofactor. It depends on L-topaquinone as a cofactor. Topaquinone (TPQ) is generated by copper-dependent autoxidation of a specific tyrosyl residue. Post-translationally, N-glycosylated.

It localises to the secreted. The protein resides in the extracellular space. Its subcellular location is the cell membrane. The enzyme catalyses histamine + O2 + H2O = imidazole-4-acetaldehyde + H2O2 + NH4(+). It carries out the reaction N(tau)-methylhistamine + O2 + H2O = 1-methylimidazole-4-acetaldehyde + H2O2 + NH4(+). The catalysed reaction is putrescine + O2 + H2O = 4-aminobutanal + H2O2 + NH4(+). It catalyses the reaction cadaverine + O2 + H2O = 5-aminopentanal + H2O2 + NH4(+). Its activity is regulated as follows. Inhibited by amiloride and amiloride analogs. Functionally, catalyzes the oxidative deamination of primary amines to the corresponding aldehydes with the concomitant production of hydrogen peroxide and ammonia. Its preferred substrates in vitro are the diamines histamine and 1-methylhistamine and it could therefore play a role in allergic and immune responses. Has a broad specificity for diamines and can also act on cadaverine and putrescine, two products of amino acid catabolism. It could also act on polyamines, like spermidine and spermine though less efficiently, and regulate various biological processes. The protein is Diamine oxidase [copper-containing] of Mus musculus (Mouse).